The primary structure comprises 108 residues: Transcription initiation factor IIA subunit 2 (108 aa).

It belongs to the TFIIA subunit 2 family. TFIIA is a heterodimer of the large unprocessed subunit 1 and a small subunit gamma. It was originally believed to be a heterotrimer of an alpha, a beta and a gamma subunit. Interacts with NCOA6 general coactivator. TFIIA forms a complex with TBP.

The protein localises to the nucleus. TFIIA is a component of the transcription machinery of RNA polymerase II and plays an important role in transcriptional activation. TFIIA in a complex with TBP mediates transcriptional activity. The chain is Transcription initiation factor IIA subunit 2 (gtf2a2) from Oncorhynchus mykiss (Rainbow trout).